A 96-amino-acid polypeptide reads, in one-letter code: Co-chaperonin GroES (96 aa).

This sequence belongs to the GroES chaperonin family. Heptamer of 7 subunits arranged in a ring. Interacts with the chaperonin GroEL.

The protein localises to the cytoplasm. In terms of biological role, together with the chaperonin GroEL, plays an essential role in assisting protein folding. The GroEL-GroES system forms a nano-cage that allows encapsulation of the non-native substrate proteins and provides a physical environment optimized to promote and accelerate protein folding. GroES binds to the apical surface of the GroEL ring, thereby capping the opening of the GroEL channel. In Legionella micdadei (Tatlockia micdadei), this protein is Co-chaperonin GroES.